A 332-amino-acid polypeptide reads, in one-letter code: Fructose-1,6-bisphosphatase class 1 (332 aa).

Mg(2+) is bound by residues E89, D110, L112, and D113. Substrate is bound by residues D113–S116, N206, Y239, Y257–Y259, and K269. E275 provides a ligand contact to Mg(2+).

The protein belongs to the FBPase class 1 family. As to quaternary structure, homotetramer. Requires Mg(2+) as cofactor.

The protein resides in the cytoplasm. It catalyses the reaction beta-D-fructose 1,6-bisphosphate + H2O = beta-D-fructose 6-phosphate + phosphate. The protein operates within carbohydrate biosynthesis; gluconeogenesis. The sequence is that of Fructose-1,6-bisphosphatase class 1 from Escherichia coli (strain ATCC 8739 / DSM 1576 / NBRC 3972 / NCIMB 8545 / WDCM 00012 / Crooks).